The sequence spans 391 residues: Homocysteine-responsive endoplasmic reticulum-resident ubiquitin-like domain member 1 protein (391 aa).

Met1 carries the post-translational modification N-acetylmethionine. Residues 1-263 are Cytoplasmic-facing; that stretch reads MESETEPEPV…VEEDDEINRD (263 aa). In terms of domain architecture, Ubiquitin-like spans 10-72; that stretch reads VTLLVKSPNQ…LLDHQCLRDL (63 aa). A disordered region spans residues 100–126; sequence KVAESTEEPAGSNRGQYPEDSSSDGLR. The segment covering 112 to 124 has biased composition (polar residues); that stretch reads NRGQYPEDSSSDG. An interaction with UBQLN1 region spans residues 115–200; it reads QYPEDSSSDG…ASGAFVPPPS (86 aa). Residue Ser135 is modified to Phosphoserine. Residues 264-284 form a helical membrane-spanning segment; the sequence is WLDWTYSAATFSVFLSILYFY. At 285 to 289 the chain is on the lumenal side; that stretch reads SSLSR. Residues 290–310 form a helical membrane-spanning segment; that stretch reads FLMVMGATVVMYLHHVGWFPF. At 311 to 391 the chain is on the cytoplasmic side; sequence RPRPVQNFPN…LPEGPPAIAN (81 aa). Residues 318–359 are disordered; the sequence is FPNDGPPPDIVNQDPNNNLQEGTDPETEDPNHVPPDRGVLDG. A compositionally biased stretch (basic and acidic residues) spans 346–357; it reads DPNHVPPDRGVL.

As to quaternary structure, interacts with PSEN1 and PSEN2. Interacts with UBXN6. Interacts with UBQLN1, UBQLN2 and UBQLN4. Component of the HRD1 complex, which comprises at least SYNV1/HRD1, FAM8A1, HERPUD1/HERP, OS9, SEL1L and UBE2J1. FAM8A1 binding to SYNV1 may promote recruitment of HERPUD1 to the HRD1 complex.

The protein resides in the endoplasmic reticulum membrane. In terms of biological role, component of the endoplasmic reticulum quality control (ERQC) system also called ER-associated degradation (ERAD) involved in ubiquitin-dependent degradation of misfolded endoplasmic reticulum proteins. Binds to ubiquilins and this interaction is required for efficient degradation of CD3D via the ERAD pathway. This Pongo abelii (Sumatran orangutan) protein is Homocysteine-responsive endoplasmic reticulum-resident ubiquitin-like domain member 1 protein (HERPUD1).